The chain runs to 979 residues: MHC class II regulatory factor RFX1 (979 aa).

3 disordered regions span residues 1–136 (MATQ…QVVQ), 181–227 (QSAA…PTGT), and 370–405 (TSTG…STGG). The segment covering 12–44 (APPPSQPPQAPPQAQPQPPPPPPPAAPQPPQPP) has biased composition (pro residues). The segment covering 45–73 (TAAATPQPQYVTELQSPQPQAQPPGGQKQ) has biased composition (low complexity). Ser60 is modified (phosphoserine). The segment covering 81 to 96 (VPAPSQPTGAPTPSPA) has biased composition (pro residues). Positions 114-126 (ETVSEASPGSTAS) are enriched in polar residues. The span at 127 to 136 (QTGVPTQVVQ) shows a compositional bias: low complexity. Composition is skewed to polar residues over residues 190–203 (GQVS…QQVH) and 209–220 (SPVQANSSSSKT). Low complexity predominate over residues 370–379 (TSTGAGASNS). A compositionally biased stretch (gly residues) spans 380 to 405 (SGGGGSGGGGGGGGGGGGGGSGSTGG). The segment at residues 438-513 (TVQWLLDNYE…YHYYGLRIKA (76 aa)) is a DNA-binding region (RFX-type winged-helix). Residues 744–979 (FAQTLRRYTS…GLFVQALPSS (236 aa)) are necessary for dimerization. Residues 915–960 (SLNPLDPDKDEEEEEEEESEDELPQDISLAAGGESPALGPETLEPP) are disordered. Acidic residues predominate over residues 922 to 938 (DKDEEEEEEEESEDELP). Phosphoserine occurs at positions 978 and 979.

Belongs to the RFX family. In terms of assembly, homodimer; binds DNA as a homodimer. Heterodimer; heterodimerizes with RFX2 and RFX3.

The protein resides in the nucleus. Functionally, regulatory factor essential for MHC class II genes expression. Binds to the X boxes of MHC class II genes. Also binds to an inverted repeat (ENH1) required for hepatitis B virus genes expression and to the most upstream element (alpha) of the RPL30 promoter. This is MHC class II regulatory factor RFX1 (RFX1) from Homo sapiens (Human).